The sequence spans 251 residues: Squamosa promoter-binding-like protein 4 (251 aa).

Residues 1–15 (MDWMPPPKPTSPRSP) show a composition bias toward pro residues. Residues 1–64 (MDWMPPPKPT…RAEEGGGGGG (64 aa)) form a disordered region. Positions 24 to 43 (AAVPGSSSGEVSAAAAAAAA) are enriched in low complexity. The SBP-type zinc finger occupies 65–142 (EVRCQVEGCG…YDHNARRRKP (78 aa)). Zn(2+) contacts are provided by Cys68, Cys73, Cys90, His93, Cys109, Cys112, His116, and Cys128. The Bipartite nuclear localization signal motif lies at 125 to 141 (KRSCRRRLYDHNARRRK).

Expressed in stems, leaf sheaths, and young panicles.

Its subcellular location is the nucleus. In terms of biological role, trans-acting factor that binds specifically to the consensus nucleotide sequence 5'-TNCGTACAA-3'. May be involved in panicle development. The sequence is that of Squamosa promoter-binding-like protein 4 (SPL4) from Oryza sativa subsp. japonica (Rice).